The sequence spans 179 residues: Auxin-responsive protein IAA15 (179 aa).

The EAR-like (transcriptional repression) signature appears at 21 to 25; that stretch reads LTLAL. The PB1 domain maps to 86–173; it reads RKYVKVALDG…SCKRMRLMKT (88 aa).

This sequence belongs to the Aux/IAA family. In terms of assembly, homodimers and heterodimers.

It is found in the nucleus. In terms of biological role, aux/IAA proteins are short-lived transcriptional factors that function as repressors of early auxin response genes at low auxin concentrations. Repression is thought to result from the interaction with auxin response factors (ARFs), proteins that bind to the auxin-responsive promoter element (AuxRE). Formation of heterodimers with ARF proteins may alter their ability to modulate early auxin response genes expression. This chain is Auxin-responsive protein IAA15 (IAA15), found in Arabidopsis thaliana (Mouse-ear cress).